A 503-amino-acid polypeptide reads, in one-letter code: MSVPPAVPLLEVRDVTKSFGNVAAVQGVSFPLYGGEAHALVGENGAGKSTIVKMLAGVHGPDTGSLLVGGEEVSLGSPSDAKARGIAVIYQEPTLFPDLTIAENIFIGTQPRARLGMIDRSAMNTAARALFDRLGVPMDPDRLASGLSIADQQLVEIAKALSTDANVIVMDEPTAALSGNEVERLFKVARSLCASGSAVMFISHRFEEIFALCQRVTVMRDGRHISTSELAGLTVDDLVRSMVGRDLGALFPKIDVEPGAVVLEIENLSRAGVFSDISFQVRAGEIVALSGLVGAGRSEVMQSAFGVDPRDSGDVRVRGKSLRKGSPKAAMRAGMALVPEDRRQQGLILDMSIERNATLTRSSALARFGFLFGGRERRSAYEWTKKLQTKYARITDPVGVLSGGNQQKVVLAKWMATAPSVLIVDEPTRGIDVGTKAEVHRIISTLASEGVAVVMISSELPEVLGMADRVLVMREGRIVSELSRSEADEEKIMFAATGSEAAA.

2 ABC transporter domains span residues 10–246 (LEVR…VGRD) and 256–500 (VEPG…TGSE). 42–49 (GENGAGKS) provides a ligand contact to ATP.

Belongs to the ABC transporter superfamily. Ribose importer (TC 3.A.1.2.1) family. As to quaternary structure, the complex is composed of an ATP-binding protein (RbsA), two transmembrane proteins (RbsC) and a solute-binding protein (RbsB).

It localises to the cell membrane. It catalyses the reaction D-ribose(out) + ATP + H2O = D-ribose(in) + ADP + phosphate + H(+). In terms of biological role, part of the ABC transporter complex RbsABC involved in ribose import. Responsible for energy coupling to the transport system. This chain is Ribose import ATP-binding protein RbsA, found in Rhodococcus jostii (strain RHA1).